Consider the following 483-residue polypeptide: Altronate oxidoreductase (483 aa).

18-29 (IIQFGEGNFLRA) contributes to the NAD(+) binding site.

This sequence belongs to the mannitol dehydrogenase family. UxaB subfamily.

It carries out the reaction D-altronate + NAD(+) = keto-D-tagaturonate + NADH + H(+). It participates in carbohydrate metabolism; pentose and glucuronate interconversion. The sequence is that of Altronate oxidoreductase from Escherichia coli (strain 55989 / EAEC).